The sequence spans 445 residues: MEAAVAPGRDAPAPAASQPSGCGKHNSPERKVYMDYNATTPLEPEVIQAMTKAMWEAWGNPSSPYSAGRKAKDIINAARESLAKMIGGKPQDIIFTSGGTESNNLVIHSVVKHFHANQTSKGHTGGHHSPVKGAKPHFITSSVEHDSIRLPLEHLVEEQVAAVTFVPVSKVSGQAEVDDILAAVRPTTRLVTIMLANNETGIVMPVPEISQRIKALNQERVAAGLPPILVHTDAAQALGKQRVDVEDLGVDFLTIVGHKFYGPRIGALYIRGLGEFTPLYPMLFGGGQERNFRPGTENTPMIAGLGKAAELVTQNCEAYEAHMRDVRDYLEERLEAEFGQKRIHLNSQFPGTQRLPNTCNFSIRGPRLQGHVVLAQCRVLMASVGAACHSDHGDQPSPVLLSYGVPFDVARNALRLSVGRSTTRAEVDLVVQDLKQAVAQLEDQA.

Met-1 bears the N-acetylmethionine mark. The interval 1–28 is disordered; sequence MEAAVAPGRDAPAPAASQPSGCGKHNSP. Ser-129 is subject to Phosphoserine. Lys-259 carries the post-translational modification N6-(pyridoxal phosphate)lysine. The S-selanylcysteine intermediate role is filled by Cys-388.

The protein belongs to the class-V pyridoxal-phosphate-dependent aminotransferase family. In terms of assembly, homodimer. Pyridoxal 5'-phosphate serves as cofactor.

The protein resides in the cytoplasm. It is found in the cytosol. It catalyses the reaction L-selenocysteine + AH2 = hydrogenselenide + L-alanine + A + H(+). In terms of biological role, catalyzes the decomposition of L-selenocysteine to L-alanine and elemental selenium. This Homo sapiens (Human) protein is Selenocysteine lyase (SCLY).